Here is a 170-residue protein sequence, read N- to C-terminus: Urease accessory protein UreE (170 aa).

The protein belongs to the UreE family.

The protein resides in the cytoplasm. Involved in urease metallocenter assembly. Binds nickel. Probably functions as a nickel donor during metallocenter assembly. The chain is Urease accessory protein UreE from Helicobacter pylori (strain G27).